The chain runs to 1035 residues: Cell-division control histidine kinase PdhS (1035 aa).

The important for polar localization stretch occupies residues 1–613 (MSGSYPFIDI…HADGSEEPVD (613 aa)). Residues 500–533 (QGLANTRAESETPVSETSSIEPVEPTPPVKTRSE) are disordered. An interaction with DivK region spans residues 614–1035 (AHLNAIAWRG…VFPPTRVLAD (422 aa)). Residues 659 to 730 (HVEELKTILD…YLHGLSGNGV (72 aa)) enclose the PAS domain. One can recognise a Histidine kinase domain in the interval 802-1031 (RISHEIRTPL…VVEIVFPPTR (230 aa)). Residue histidine 805 is modified to Phosphohistidine; by autocatalysis.

In terms of assembly, interacts with DivK.

The protein resides in the cytoplasm. The catalysed reaction is ATP + protein L-histidine = ADP + protein N-phospho-L-histidine.. In terms of biological role, functions as a polar differentiation marker. Essential protein that, by localizing in the old pole of dividing cells, controls cell division and maturation, probably through control of DivK phosphorylation status and cellular distribution, which in turn regulates CtrA, a transcriptional regulator of the minB operon. The asymmetrical localization of this protein is probably required for cells to enter a new division cycle. The chain is Cell-division control histidine kinase PdhS (pdhS) from Brucella ovis (strain ATCC 25840 / 63/290 / NCTC 10512).